Reading from the N-terminus, the 373-residue chain is Dual-specificity RNA methyltransferase RlmN (373 aa).

The Proton acceptor role is filled by glutamate 94. The Radical SAM core domain maps to glutamate 100–aspartate 339. An intrachain disulfide couples cysteine 107 to cysteine 344. Residues cysteine 114, cysteine 118, and cysteine 121 each contribute to the [4Fe-4S] cluster site. Residues glycine 168 to glutamate 169, serine 200, serine 222 to histidine 224, and asparagine 301 each bind S-adenosyl-L-methionine. The active-site S-methylcysteine intermediate is cysteine 344.

The protein belongs to the radical SAM superfamily. RlmN family. [4Fe-4S] cluster serves as cofactor.

Its subcellular location is the cytoplasm. It carries out the reaction adenosine(2503) in 23S rRNA + 2 reduced [2Fe-2S]-[ferredoxin] + 2 S-adenosyl-L-methionine = 2-methyladenosine(2503) in 23S rRNA + 5'-deoxyadenosine + L-methionine + 2 oxidized [2Fe-2S]-[ferredoxin] + S-adenosyl-L-homocysteine. The catalysed reaction is adenosine(37) in tRNA + 2 reduced [2Fe-2S]-[ferredoxin] + 2 S-adenosyl-L-methionine = 2-methyladenosine(37) in tRNA + 5'-deoxyadenosine + L-methionine + 2 oxidized [2Fe-2S]-[ferredoxin] + S-adenosyl-L-homocysteine. Specifically methylates position 2 of adenine 2503 in 23S rRNA and position 2 of adenine 37 in tRNAs. m2A2503 modification seems to play a crucial role in the proofreading step occurring at the peptidyl transferase center and thus would serve to optimize ribosomal fidelity. The sequence is that of Dual-specificity RNA methyltransferase RlmN from Shewanella amazonensis (strain ATCC BAA-1098 / SB2B).